A 396-amino-acid polypeptide reads, in one-letter code: Ribosomal RNA large subunit methyltransferase I (396 aa).

The 80-residue stretch at 2–81 folds into the PUA domain; it reads SVRLVLAKGR…ETIDIAFFTR (80 aa).

The protein belongs to the methyltransferase superfamily. RlmI family.

Its subcellular location is the cytoplasm. It carries out the reaction cytidine(1962) in 23S rRNA + S-adenosyl-L-methionine = 5-methylcytidine(1962) in 23S rRNA + S-adenosyl-L-homocysteine + H(+). In terms of biological role, specifically methylates the cytosine at position 1962 (m5C1962) of 23S rRNA. The sequence is that of Ribosomal RNA large subunit methyltransferase I from Cronobacter sakazakii (strain ATCC BAA-894) (Enterobacter sakazakii).